Consider the following 213-residue polypeptide: UPF0111 protein TM_0914 (213 aa).

Belongs to the UPF0111 family.

This Thermotoga maritima (strain ATCC 43589 / DSM 3109 / JCM 10099 / NBRC 100826 / MSB8) protein is UPF0111 protein TM_0914.